We begin with the raw amino-acid sequence, 1272 residues long: CST complex subunit CTC1 (1272 aa).

Belongs to the CTC1 family. In terms of assembly, component of the CST complex, composed of CTC1, TEN1 and STN1. Interacts with POT1A.

The protein localises to the nucleus. The protein resides in the chromosome. It is found in the telomere. Component of the CST complex, a complex that binds to single-stranded DNA and is required to protect telomeres from DNA degradation. The CST complex binds single-stranded DNA with high affinity in a sequence-independent manner, while isolated subunits bind DNA with low affinity by themselves. Associates with enzymatically active telomerase. This Arabidopsis thaliana (Mouse-ear cress) protein is CST complex subunit CTC1.